A 1530-amino-acid polypeptide reads, in one-letter code: Neurexin-1 (1530 aa).

Positions 1-30 (MGTALLQRGGCFLLCLSLLLLGCWAELGSG) are cleaved as a signal peptide. A Laminin G-like 1 domain is found at 31–212 (LEFPGAEGQW…KLDDEPPNSG (182 aa)). Residues 31–1454 (LEFPGAEGQW…EVIRESSSTT (1424 aa)) are Extracellular-facing. 2 N-linked (GlcNAc...) asparagine glycosylation sites follow: N125 and N190. Residues 199-221 (SGEVKLDDEPPNSGGGSPCEAGE) form a disordered region. Residues 213 to 256 (GGSPCEAGEEGEGGVCLNGGVCSVVDDQAVCDCSRTGFRGKDCS) enclose the EGF-like 1 domain. Cystine bridges form between C228-C243 and C245-C255. Laminin G-like domains are found at residues 299 to 496 (IATF…AFKC) and 503 to 695 (DPIT…KPSC). Ca(2+) contacts are provided by D345, L362, and M430. 5 cysteine pairs are disulfide-bonded: C460-C496, C666-C695, C703-C714, C708-C723, and C725-C735. The EGF-like 2 domain occupies 699 to 736 (TAKPCLSNPCKNNGMCRDGWNRYVCDCSGTGYLGRSCE). A glycan (O-linked (Glc...) serine) is linked at S705. Laminin G-like domains follow at residues 741–914 (VLSY…IDYC) and 928–1103 (DPVT…ERGC). Ca(2+) contacts are provided by D788 and L805. N813 carries an N-linked (GlcNAc...) asparagine glycan. R864 is a Ca(2+) binding site. Intrachain disulfides connect C906-C914, C1075-C1103, C1110-C1121, C1115-C1130, and C1132-C1142. One can recognise an EGF-like 3 domain in the interval 1106–1143 (PSTTCQEDSCSNQGVCLQQWDGISCDCSMTSFSGPLCN). A Laminin G-like 6 domain is found at 1149–1347 (YIFSKGGGQI…DANIAIVGNV (199 aa)). Positions 1199 and 1216 each coordinate Ca(2+). N1246 carries N-linked (GlcNAc...) asparagine glycosylation. Positions 1298 and 1300 each coordinate Ca(2+). S1408 carries an O-linked (Xyl...) (heparan sulfate) serine glycan. The tract at residues 1411–1443 (CPSDDEDIDPCEPSSGGLANPTRAGGREPYPGS) is disordered. A helical transmembrane segment spans residues 1455 to 1475 (GMVVGIVAAAALCILILLYAM). Topologically, residues 1476 to 1530 (YKYRNRDEGSYHVDESRNYISNSAQSNGAVVKEKQPSSAKSANKNKKNKDKEYYV) are cytoplasmic. The interaction with CASK stretch occupies residues 1497-1523 (NSAQSNGAVVKEKQPSSAKSANKNKKN). The segment at 1497–1530 (NSAQSNGAVVKEKQPSSAKSANKNKKNKDKEYYV) is disordered.

This sequence belongs to the neurexin family. Interacts (via laminin G-like domain 2 and/or laminin G-like domain 6) with NLGN1 forming a heterotetramer, where one NLGN1 dimer interacts with one NRXN1 dimer. Also interacts (via laminin G-like domain 2 and/or laminin G-like domain 6) with NLGN2, NLGN3 and NLGN4L; interactions with NLGN1, NLGN2, NLGN3 and NLGN4L are calcium-dependent. Interacts (via cytoplasmic C-terminal region) with CASK (via the PDZ, SH3 and guanylate kinase-like domains). Interacts (via cytoplasmic C-terminus) with CASKIN1 and APBA1. Interacts (via laminin G-like domain 2) with NXPH1 and NXPH3. Alpha-type isoforms (neurexin-1-alpha) interact (via laminin G-like domain 2 and/or laminin G-like domain 6) with DAG1 (via alpha-dystroglycan chain). Interacts with LRRTM1, LRRTM2, LRRTM3 and LRRTM4. Interacts with SYT13 and SYTL1. Interacts with CBLN1, CBLN2 and, less avidly, with CBLN4. Interacts with CLSTN3. Alpha-type isoforms interact with alpha-latrotoxin from spider venom. Post-translationally, O-glycosylated; contains heparan sulfate. Heparan sulfate attachment is required for synapse development by mediating interactions with neuroligins and LRRTM2.

It is found in the presynaptic cell membrane. Functionally, cell surface protein involved in cell-cell-interactions, exocytosis of secretory granules and regulation of signal transmission. Function is isoform-specific. Alpha-type isoforms have a long N-terminus with six laminin G-like domains and play an important role in synaptic signal transmission. Alpha-type isoforms play a role in the regulation of calcium channel activity and Ca(2+)-triggered neurotransmitter release at synapses and at neuromuscular junctions. They play an important role in Ca(2+)-triggered exocytosis of secretory granules in pituitary gland. They may affect their functions at synapses and in endocrine cells via their interactions with proteins from the exocytotic machinery. Likewise, alpha-type isoforms play a role in regulating the activity of postsynaptic NMDA receptors, a subtype of glutamate-gated ion channels. Both alpha-type and beta-type isoforms may play a role in the formation or maintenance of synaptic junctions via their interactions (via the extracellular domains) with neuroligin family members, CBLN1 or CBLN2. In vitro, triggers the de novo formation of presynaptic structures. May be involved in specification of excitatory synapses. Alpha-type isoforms were first identified as receptors for alpha-latrotoxin from spider venom. The chain is Neurexin-1 (NRXN1) from Bos taurus (Bovine).